The sequence spans 288 residues: Homoserine kinase (288 aa).

Position 78–88 (78–88 (PLARGLGSSSS)) interacts with ATP.

This sequence belongs to the GHMP kinase family. Homoserine kinase subfamily.

The protein resides in the cytoplasm. It carries out the reaction L-homoserine + ATP = O-phospho-L-homoserine + ADP + H(+). It participates in amino-acid biosynthesis; L-threonine biosynthesis; L-threonine from L-aspartate: step 4/5. Its function is as follows. Catalyzes the ATP-dependent phosphorylation of L-homoserine to L-homoserine phosphate. The protein is Homoserine kinase of Streptococcus agalactiae serotype V (strain ATCC BAA-611 / 2603 V/R).